The chain runs to 268 residues: Tryptophan synthase alpha chain (268 aa).

Active-site proton acceptor residues include glutamate 49 and aspartate 60.

Belongs to the TrpA family. Tetramer of two alpha and two beta chains.

The enzyme catalyses (1S,2R)-1-C-(indol-3-yl)glycerol 3-phosphate + L-serine = D-glyceraldehyde 3-phosphate + L-tryptophan + H2O. It participates in amino-acid biosynthesis; L-tryptophan biosynthesis; L-tryptophan from chorismate: step 5/5. In terms of biological role, the alpha subunit is responsible for the aldol cleavage of indoleglycerol phosphate to indole and glyceraldehyde 3-phosphate. The chain is Tryptophan synthase alpha chain from Shigella dysenteriae serotype 1 (strain Sd197).